Consider the following 446-residue polypeptide: Serine decarboxylase 3 (446 aa).

Substrate is bound at residue H162. N6-(pyridoxal phosphate)lysine is present on K274.

The protein belongs to the group II decarboxylase family. The cofactor is pyridoxal 5'-phosphate.

The catalysed reaction is L-serine + H(+) = ethanolamine + CO2. Functionally, catalyzes the biosynthesis of ethanolamine from serine. Decarboxylation of free serine is the major source of ethanolamine production in plants and ethanolamine metabolism is crucial for the synthesis of choline, phosphatidylethanolamine (PE) and phosphatidylcholine (PC), and thus for plant growth. The sequence is that of Serine decarboxylase 3 from Oryza sativa subsp. japonica (Rice).